The following is a 403-amino-acid chain: Casein kinase II subunit alpha-2 (403 aa).

The first 31 residues, 1–31 (MHLIFFFSYFLRRYLLLLCAILILRAPLAHS), serve as a signal peptide directing secretion. Residues 104–389 (YEVVRKVGRG…AKEAMAHPYF (286 aa)) form the Protein kinase domain. ATP contacts are provided by residues 110-118 (VGRGKYSEV) and K133. N-linked (GlcNAc...) asparagine glycosylation is present at N182. Catalysis depends on D221, which acts as the Proton acceptor.

It belongs to the protein kinase superfamily. Ser/Thr protein kinase family. CK2 subfamily. In terms of assembly, heterotetramer of two catalytic alpha subunits and two regulatory beta subunits. Seems to be present in all plant organs. But seems to be more expressed than CKA1.

It localises to the nucleus. It is found in the nucleolus. The enzyme catalyses L-seryl-[protein] + ATP = O-phospho-L-seryl-[protein] + ADP + H(+). It carries out the reaction L-threonyl-[protein] + ATP = O-phospho-L-threonyl-[protein] + ADP + H(+). Its function is as follows. Casein kinases are operationally defined by their preferential utilization of acidic proteins such as caseins as substrates. The alpha chain contains the catalytic site. The tetrameric holoenzyme CK2, composed of two alpha and two beta subunits, phosphorylates the transcription factor PIF1 after an exposure to light, resulting in a proteasome-dependent degradation of PIF1 and promotion of photomorphogenesis. CK2 phosphorylates translation initiation factors. May participate in the regulation of the initiation of translation. Acts as circadian clock component that maintains the correct period length through phosphorylation of CCA1. May act as an ectokinase that phosphorylates several extracellular proteins. The sequence is that of Casein kinase II subunit alpha-2 from Arabidopsis thaliana (Mouse-ear cress).